The primary structure comprises 153 residues: SKP1-like protein 9 (153 aa).

Residues 95 to 153 (IKAANYLNIKSLFDLACQTVAEIIKGNTPEQIREFFNIENDLTPEEEAAIRRENKWAFE) are interaction with the F-box domain of F-box proteins.

Belongs to the SKP1 family. As to quaternary structure, part of a SCF (SKP1-cullin-F-box) protein ligase complex. Interacts with CPR1/CPR30 and At3g61590. In terms of tissue distribution, expressed in leaves, shoot apical meristem (SAM), roots, flowers and pollen.

It localises to the nucleus. Its pathway is protein modification; protein ubiquitination. In terms of biological role, involved in ubiquitination and subsequent proteasomal degradation of target proteins. Together with CUL1, RBX1 and a F-box protein, it forms a SCF E3 ubiquitin ligase complex. The functional specificity of this complex depends on the type of F-box protein. In the SCF complex, it serves as an adapter that links the F-box protein to CUL1. The chain is SKP1-like protein 9 (ASK9) from Arabidopsis thaliana (Mouse-ear cress).